Consider the following 427-residue polypeptide: Glutamate-1-semialdehyde 2,1-aminomutase (427 aa).

The residue at position 267 (Lys-267) is an N6-(pyridoxal phosphate)lysine.

The protein belongs to the class-III pyridoxal-phosphate-dependent aminotransferase family. HemL subfamily. Homodimer. Pyridoxal 5'-phosphate serves as cofactor.

The protein resides in the cytoplasm. The catalysed reaction is (S)-4-amino-5-oxopentanoate = 5-aminolevulinate. Its pathway is porphyrin-containing compound metabolism; protoporphyrin-IX biosynthesis; 5-aminolevulinate from L-glutamyl-tRNA(Glu): step 2/2. The protein is Glutamate-1-semialdehyde 2,1-aminomutase of Sulfurihydrogenibium azorense (strain DSM 15241 / OCM 825 / Az-Fu1).